We begin with the raw amino-acid sequence, 338 residues long: Sesquiterpene synthase 2 (338 aa).

D93, N228, S232, and E236 together coordinate Mg(2+). Residues 93–97 (DNISD) carry the DDXXD motif motif. Positions 228–236 (NDIFSYNVE) match the NSE/DTE motif motif. Positions 316 and 317 each coordinate (2E,6E)-farnesyl diphosphate.

Belongs to the terpene synthase family. The cofactor is Mg(2+).

It carries out the reaction (2E,6E)-farnesyl diphosphate = alpha-copaene + diphosphate. It catalyses the reaction (2E,6E)-farnesyl diphosphate = beta-copaene + diphosphate. The catalysed reaction is (2E,6E)-farnesyl diphosphate = alpha-muurolene + diphosphate. The enzyme catalyses (2E,6E)-farnesyl diphosphate = gamma-muurolene + diphosphate. It carries out the reaction (2E,6E)-farnesyl diphosphate = delta-cadinene + diphosphate. Its function is as follows. Terpene cyclase that catalyzes the cyclization of farnesyl diphosphate (FPP) to various sesquiterpenes, including alpha-copaene, beta-copaene, beta-elemene, alpha-muurolene, gamma-muurolene and delta-cadinene. In Postia placenta (strain ATCC 44394 / Madison 698-R) (Brown rot fungus), this protein is Sesquiterpene synthase 2.